We begin with the raw amino-acid sequence, 366 residues long: Probable quinol oxidase subunit 2 (366 aa).

Positions 1–19 (MSKFKSLLLLFGTLILLSG) are cleaved as a signal peptide. The N-palmitoyl cysteine moiety is linked to residue Cys-20. A lipid anchor (S-diacylglycerol cysteine) is attached at Cys-20. 2 consecutive transmembrane segments (helical) span residues 38–58 (FLILYSIVFMLVICFVVLGMF) and 80–100 (AIIETIWFVIPIIIVAALAIP). Residues 330 to 366 (EPYNNEFKKDESKNAKEMKKISKDAQDQDNDDHGGGH) form a disordered region. The span at 335–366 (EFKKDESKNAKEMKKISKDAQDQDNDDHGGGH) shows a compositional bias: basic and acidic residues.

Belongs to the cytochrome c oxidase subunit 2 family.

The protein localises to the cell membrane. The enzyme catalyses 2 a quinol + O2 = 2 a quinone + 2 H2O. Functionally, catalyzes quinol oxidation with the concomitant reduction of oxygen to water. Subunit II transfers the electrons from a quinol to the binuclear center of the catalytic subunit I. The polypeptide is Probable quinol oxidase subunit 2 (qoxA) (Staphylococcus aureus (strain bovine RF122 / ET3-1)).